We begin with the raw amino-acid sequence, 171 residues long: MEEYAREPCPWRIVDDCGGAFTMGTIGGGIFQAFKGFRNSPVGINHRLRGSLTAIKTRAPQLGGSFAVWGGLFSTIDCSMVQIRGKEDPWNSITSGALTGAILAARNGPVAMVGSAAMGGILLALIEGAGILLTRFASAQFPNGPQFTEDHSQLPSSQLPSSPFGDYRQYQ.

A disulfide bridge links cysteine 9 with cysteine 78. Transmembrane regions (helical) follow at residues 17–37 (CGGAFTMGTIGGGIFQAFKGF), 63–77 (GGSFAVWGGLFSTID), and 113–133 (VGSAAMGGILLALIEGAGILL). The segment at 144 to 171 (GPQFTEDHSQLPSSQLPSSPFGDYRQYQ) is disordered. Residues 153–163 (QLPSSQLPSSP) are compositionally biased toward low complexity.

This sequence belongs to the Tim17/Tim22/Tim23 family. Component of the TIM23 complex at least composed of TIMM23, TIMM17 (TIMM17A or TIMM17B) and TIMM50. The complex interacts with the TIMM44 component of the PAM complex and with DNAJC15. Degraded by YMEL1 downstream of the integrated stress response (ISR).

The protein localises to the mitochondrion inner membrane. In terms of biological role, essential component of the TIM23 complex, a complex that mediates the translocation of transit peptide-containing proteins across the mitochondrial inner membrane. The sequence is that of Mitochondrial import inner membrane translocase subunit Tim17-A (Timm17a) from Mus musculus (Mouse).